The sequence spans 291 residues: Lys-63-specific deubiquitinase BRCC36 (291 aa).

Alanine 2 carries the post-translational modification N-acetylalanine. The MPN domain occupies 12–179 (VHLESDAFLV…YTCFQSVQAQ (168 aa)). Positions 122, 124, and 135 each coordinate Zn(2+). The JAMM motif signature appears at 122 to 135 (HSHPHITVWPSHVD). Serine 233 carries the phosphoserine modification.

Belongs to the peptidase M67A family. BRCC36 subfamily. In terms of assembly, component of the ARISC complex, at least composed of UIMC1/RAP80, ABRAXAS1, BRCC3/BRCC36, BABAM2 and BABAM1/NBA1. Component of the BRCA1-A complex, at least composed of BRCA1, BARD1, UIMC1/RAP80, ABRAXAS1, BRCC3/BRCC36, BABAM2 and BABAM1/NBA1. In the BRCA1-A complex, interacts directly with ABRAXAS1 and BABAM2. Component of the BRISC complex, at least composed of ABRAXAS2, BRCC3/BRCC36, BABAM2 and BABAM1/NBA1. Identified in a complex with SHMT2 and the other subunits of the BRISC complex. In the BRISC complex, interacts directly with ABRAXAS2. Identified in a complex with ABRAXAS2 and NUMA1. The BRISC complex interacts with the CSN complex. Component of the BRCA1/BRCA2 containing complex (BRCC), which also contains BRCA1, BRCA2, BARD1, BABAM2 and RAD51. BRCC is a ubiquitin E3 ligase complex that enhances cellular survival following DNA damage. Interacts with BRCA1. Binds polyubiquitin. Interacts with PWWP2B. Interacts with HDAC1; this interaction is enhanced in the presence of PWWP2B. It depends on Zn(2+) as a cofactor.

The protein resides in the nucleus. It is found in the cytoplasm. Its subcellular location is the cytoskeleton. The protein localises to the spindle pole. Functionally, metalloprotease that specifically cleaves 'Lys-63'-linked polyubiquitin chains. Does not have activity toward 'Lys-48'-linked polyubiquitin chains. Component of the BRCA1-A complex, a complex that specifically recognizes 'Lys-63'-linked ubiquitinated histones H2A and H2AX at DNA lesions sites, leading to target the BRCA1-BARD1 heterodimer to sites of DNA damage at double-strand breaks (DSBs). In the BRCA1-A complex, it specifically removes 'Lys-63'-linked ubiquitin on histones H2A and H2AX, antagonizing the RNF8-dependent ubiquitination at double-strand breaks (DSBs). Catalytic subunit of the BRISC complex, a multiprotein complex that specifically cleaves 'Lys-63'-linked ubiquitin in various substrates. Mediates the specific 'Lys-63'-specific deubiquitination associated with the COP9 signalosome complex (CSN), via the interaction of the BRISC complex with the CSN complex. The BRISC complex is required for normal mitotic spindle assembly and microtubule attachment to kinetochores via its role in deubiquitinating NUMA1. Plays a role in interferon signaling via its role in the deubiquitination of the interferon receptor IFNAR1; deubiquitination increases IFNAR1 activity by enhancing its stability and cell surface expression. Acts as a regulator of the NLRP3 inflammasome by mediating deubiquitination of NLRP3, leading to NLRP3 inflammasome assembly. Down-regulates the response to bacterial lipopolysaccharide (LPS) via its role in IFNAR1 deubiquitination. Deubiquitinates HDAC1 and PWWP2B leading to their stabilization. This Rattus norvegicus (Rat) protein is Lys-63-specific deubiquitinase BRCC36 (Brcc3).